We begin with the raw amino-acid sequence, 285 residues long: Extracellular metalloprotease NCU07200 (285 aa).

The N-terminal stretch at 1 to 18 (MQIKSFLLAAAAAPAALG) is a signal peptide. Histidine 197 serves as a coordination point for Zn(2+). Glutamate 198 is an active-site residue. Position 201 (histidine 201) interacts with Zn(2+). Cysteine 233 and cysteine 260 are disulfide-bonded. Asparagine 282 carries N-linked (GlcNAc...) asparagine glycosylation.

Belongs to the peptidase M43B family.

The protein localises to the secreted. Secreted metalloproteinase that allows assimilation of proteinaceous substrates. This is Extracellular metalloprotease NCU07200 from Neurospora crassa (strain ATCC 24698 / 74-OR23-1A / CBS 708.71 / DSM 1257 / FGSC 987).